A 237-amino-acid chain; its full sequence is Endoglucanase-1 (237 aa).

The N-terminal stretch at 1–16 is a signal peptide; sequence MKAFHLLAALAGAAVA. Position 17 is a pyrrolidone carboxylic acid (Gln17).

The protein belongs to the glycosyl hydrolase 12 (cellulase H) family.

It is found in the secreted. The enzyme catalyses Endohydrolysis of (1-&gt;4)-beta-D-glucosidic linkages in cellulose, lichenin and cereal beta-D-glucans.. In Aspergillus aculeatus, this protein is Endoglucanase-1.